The chain runs to 297 residues: Bifunctional protein FolD 2 (297 aa).

NADP(+)-binding positions include 173-175 (GKS), S198, and I239.

It belongs to the tetrahydrofolate dehydrogenase/cyclohydrolase family. As to quaternary structure, homodimer.

It catalyses the reaction (6R)-5,10-methylene-5,6,7,8-tetrahydrofolate + NADP(+) = (6R)-5,10-methenyltetrahydrofolate + NADPH. The enzyme catalyses (6R)-5,10-methenyltetrahydrofolate + H2O = (6R)-10-formyltetrahydrofolate + H(+). It functions in the pathway one-carbon metabolism; tetrahydrofolate interconversion. In terms of biological role, catalyzes the oxidation of 5,10-methylenetetrahydrofolate to 5,10-methenyltetrahydrofolate and then the hydrolysis of 5,10-methenyltetrahydrofolate to 10-formyltetrahydrofolate. The chain is Bifunctional protein FolD 2 from Sinorhizobium medicae (strain WSM419) (Ensifer medicae).